Reading from the N-terminus, the 827-residue chain is Inactive rhomboid protein 2 (827 aa).

Residues 1-87 form a disordered region; it reads MDSTDKNGES…GFRRQASLSQ (87 aa). The Cytoplasmic segment spans residues 1 to 380; sequence MDSTDKNGES…HRPYFTYWLT (380 aa). The residue at position 60 (serine 60) is a Phosphoserine. The segment covering 64 to 77 has biased composition (basic and acidic residues); sequence QRGRWQEGSSEKRP. Serine 84, serine 88, serine 294, serine 296, and serine 299 each carry phosphoserine. The chain crosses the membrane as a helical span at residues 381-401; the sequence is FVHIIITLLVICTYGIAPVGF. The Lumenal portion of the chain corresponds to 402 to 631; sequence AQHVTTQLVL…PDQFYRLWLS (230 aa). A helical membrane pass occupies residues 632–652; the sequence is LFLHAGVVHCLVSVVFQMTIL. The Cytoplasmic portion of the chain corresponds to 653–663; that stretch reads RDLEKLAGWHR. The helical transmembrane segment at 664–684 threads the bilayer; it reads IAIIFILSGITGNLASAIFLP. Topologically, residues 685-686 are lumenal; the sequence is YR. The chain crosses the membrane as a helical span at residues 687-707; it reads AEVGPAGSQFGLLACLFVELF. Residues 708 to 718 are Cytoplasmic-facing; it reads QSWQLLERPWK. Residues 719–739 form a helical membrane-spanning segment; that stretch reads AFLNLSAIVLFLFICGLLPWI. At 740 to 744 the chain is on the lumenal side; the sequence is DNIAH. Residues 745–765 form a helical membrane-spanning segment; it reads IFGFLSGLLLAFAFLPYITFG. The Cytoplasmic segment spans residues 766–773; the sequence is TSDKYRKR. A helical membrane pass occupies residues 774 to 794; sequence ALILVSLLVFAGLFASLVIWL. At 795–827 the chain is on the lumenal side; sequence YVYPINWPWIEYLTCFPFTSRFCEKYELDQVLH.

Belongs to the peptidase S54 family. As to quaternary structure, interacts with EGF. Interacts (via cytoplasmic N-terminus) with FRMD8/iTAP; this interaction leads to mutual protein stabilization. Interacts with ADAM17/TACE. As to expression, detected in retina and spleen.

Its subcellular location is the endoplasmic reticulum membrane. It is found in the cell membrane. Its function is as follows. Regulates ADAM17 protease, a sheddase of the epidermal growth factor (EGF) receptor ligands and TNF, thereby plays a role in sleep, cell survival, proliferation, migration and inflammation. Does not exhibit any protease activity on its own. The protein is Inactive rhomboid protein 2 (RHBDF2) of Canis lupus familiaris (Dog).